Reading from the N-terminus, the 714-residue chain is MFETHKVEIEWAGRPLKLETGKIARQADGAVLATYGETVVLATVVSAKAPKPGQDFFPLTVNYQEKTYAAGKIPGGYFKREGRPSENETLVSRLIDRPIRPLFPEGYKNDTQVIITVMQHDLENNPDVVAMVAASAALTLSGVPFMGPVGGARVGYINGEYVLNPHLDEMDESTLDLVVAGTQDAVLMVESEAKELSEEIMLGAVVFGQKGFQPVIDAVIRLAEVAAKEPREFEPDDHSALENAMLSIAEEDLRKAYKITEKAQRYAAVDAVKAKVKEHFLPEGVENPAHTAEEIASVFKHLQAKIVRWNILDTKSRIDGRDLVTVRPIVAEVGLLPRTHGSALFTRGETQAIVVATLGTGEDEQYVDSLTGMYKENFMLHYNFPPYSVGETGRMGSPGRREIGHGKLAWRAIHPMLPTAEQFPYTLRVVSEITESNGSSSMATVCGTSLALMDAGVPLAKPVAGIAMGLIKEDDRFAVLSDILGDEDHLGDMDFKVAGTEAGVTSLQMDIKIAGITEEIMKVALDQAKHGRVHILGEMAKAISESRGQLGEFAPRIEVMNIPVDKIREVIGSGGKVIREIVEKTGAKINIDDDGTVKIASASGKEIEAARKWIHSIVAEPEVGQVYEGTVVKTADFGAFVNFFGARDGLVHISQLASERVAKTTDVVKEGDKVWVKLMGFDERGKVRLSMKVVDQATGKEIAAEKKDGGEAAE.

Mg(2+) is bound by residues aspartate 488 and aspartate 494. The 60-residue stretch at 555–614 (PRIEVMNIPVDKIREVIGSGGKVIREIVEKTGAKINIDDDGTVKIASASGKEIEAARKWI) folds into the KH domain. The region spanning 624 to 692 (GQVYEGTVVK…ERGKVRLSMK (69 aa)) is the S1 motif domain.

Belongs to the polyribonucleotide nucleotidyltransferase family. It depends on Mg(2+) as a cofactor.

The protein resides in the cytoplasm. The enzyme catalyses RNA(n+1) + phosphate = RNA(n) + a ribonucleoside 5'-diphosphate. Its function is as follows. Involved in mRNA degradation. Catalyzes the phosphorolysis of single-stranded polyribonucleotides processively in the 3'- to 5'-direction. The polypeptide is Polyribonucleotide nucleotidyltransferase (Sinorhizobium medicae (strain WSM419) (Ensifer medicae)).